We begin with the raw amino-acid sequence, 628 residues long: Glutamyl-tRNA(Gln) amidotransferase subunit E (628 aa).

The protein belongs to the GatB/GatE family. GatE subfamily. In terms of assembly, heterodimer of GatD and GatE.

The enzyme catalyses L-glutamyl-tRNA(Gln) + L-glutamine + ATP + H2O = L-glutaminyl-tRNA(Gln) + L-glutamate + ADP + phosphate + H(+). Functionally, allows the formation of correctly charged Gln-tRNA(Gln) through the transamidation of misacylated Glu-tRNA(Gln) in organisms which lack glutaminyl-tRNA synthetase. The reaction takes place in the presence of glutamine and ATP through an activated gamma-phospho-Glu-tRNA(Gln). The GatDE system is specific for glutamate and does not act on aspartate. In Sulfurisphaera tokodaii (strain DSM 16993 / JCM 10545 / NBRC 100140 / 7) (Sulfolobus tokodaii), this protein is Glutamyl-tRNA(Gln) amidotransferase subunit E.